A 267-amino-acid chain; its full sequence is S-adenosylmethionine decarboxylase proenzyme (267 aa).

The Schiff-base intermediate with substrate; via pyruvic acid role is filled by serine 114. Serine 114 carries the post-translational modification Pyruvic acid (Ser); by autocatalysis. The active-site Proton acceptor; for processing activity is histidine 119. The active-site Proton donor; for catalytic activity is the cysteine 142.

The protein belongs to the prokaryotic AdoMetDC family. Type 2 subfamily. In terms of assembly, heterooctamer of four alpha and four beta chains arranged as a tetramer of alpha/beta heterodimers. Pyruvate serves as cofactor. Is synthesized initially as an inactive proenzyme. Formation of the active enzyme involves a self-maturation process in which the active site pyruvoyl group is generated from an internal serine residue via an autocatalytic post-translational modification. Two non-identical subunits are generated from the proenzyme in this reaction, and the pyruvate is formed at the N-terminus of the alpha chain, which is derived from the carboxyl end of the proenzyme. The post-translation cleavage follows an unusual pathway, termed non-hydrolytic serinolysis, in which the side chain hydroxyl group of the serine supplies its oxygen atom to form the C-terminus of the beta chain, while the remainder of the serine residue undergoes an oxidative deamination to produce ammonia and the pyruvoyl group blocking the N-terminus of the alpha chain.

It carries out the reaction S-adenosyl-L-methionine + H(+) = S-adenosyl 3-(methylsulfanyl)propylamine + CO2. It functions in the pathway amine and polyamine biosynthesis; S-adenosylmethioninamine biosynthesis; S-adenosylmethioninamine from S-adenosyl-L-methionine: step 1/1. Catalyzes the decarboxylation of S-adenosylmethionine to S-adenosylmethioninamine (dcAdoMet), the propylamine donor required for the synthesis of the polyamines spermine and spermidine from the diamine putrescine. This is S-adenosylmethionine decarboxylase proenzyme from Erwinia tasmaniensis (strain DSM 17950 / CFBP 7177 / CIP 109463 / NCPPB 4357 / Et1/99).